The chain runs to 277 residues: Bifunctional protein FolD 1 (277 aa).

NADP(+) contacts are provided by residues Gly-162–Ser-164 and Ser-187.

It belongs to the tetrahydrofolate dehydrogenase/cyclohydrolase family. As to quaternary structure, homodimer.

It carries out the reaction (6R)-5,10-methylene-5,6,7,8-tetrahydrofolate + NADP(+) = (6R)-5,10-methenyltetrahydrofolate + NADPH. It catalyses the reaction (6R)-5,10-methenyltetrahydrofolate + H2O = (6R)-10-formyltetrahydrofolate + H(+). The protein operates within one-carbon metabolism; tetrahydrofolate interconversion. Catalyzes the oxidation of 5,10-methylenetetrahydrofolate to 5,10-methenyltetrahydrofolate and then the hydrolysis of 5,10-methenyltetrahydrofolate to 10-formyltetrahydrofolate. The chain is Bifunctional protein FolD 1 from Syntrophomonas wolfei subsp. wolfei (strain DSM 2245B / Goettingen).